The following is a 199-amino-acid chain: Holliday junction branch migration complex subunit RuvA (199 aa).

The domain I stretch occupies residues methionine 1–alanine 64. Residues serine 65 to methionine 143 are domain II. Residues arginine 144–glycine 150 are flexible linker. Positions serine 151–leucine 199 are domain III.

Belongs to the RuvA family. Homotetramer. Forms an RuvA(8)-RuvB(12)-Holliday junction (HJ) complex. HJ DNA is sandwiched between 2 RuvA tetramers; dsDNA enters through RuvA and exits via RuvB. An RuvB hexamer assembles on each DNA strand where it exits the tetramer. Each RuvB hexamer is contacted by two RuvA subunits (via domain III) on 2 adjacent RuvB subunits; this complex drives branch migration. In the full resolvosome a probable DNA-RuvA(4)-RuvB(12)-RuvC(2) complex forms which resolves the HJ.

Its subcellular location is the cytoplasm. The RuvA-RuvB-RuvC complex processes Holliday junction (HJ) DNA during genetic recombination and DNA repair, while the RuvA-RuvB complex plays an important role in the rescue of blocked DNA replication forks via replication fork reversal (RFR). RuvA specifically binds to HJ cruciform DNA, conferring on it an open structure. The RuvB hexamer acts as an ATP-dependent pump, pulling dsDNA into and through the RuvAB complex. HJ branch migration allows RuvC to scan DNA until it finds its consensus sequence, where it cleaves and resolves the cruciform DNA. The sequence is that of Holliday junction branch migration complex subunit RuvA from Nitrosococcus oceani (strain ATCC 19707 / BCRC 17464 / JCM 30415 / NCIMB 11848 / C-107).